A 315-amino-acid chain; its full sequence is Secreted frizzled-related protein 5 (315 aa).

Positions 1-27 (MRAAAGGARAAVLALLLGALHGAPARG) are cleaved as a signal peptide. The FZ domain occupies 46 to 163 (SKPPQCLDIP…PLDNDLCIAV (118 aa)). Intrachain disulfides connect cysteine 51/cysteine 114, cysteine 61/cysteine 107, cysteine 98/cysteine 133, cysteine 122/cysteine 160, cysteine 126/cysteine 150, cysteine 179/cysteine 251, cysteine 182/cysteine 253, and cysteine 196/cysteine 301. In terms of domain architecture, NTR spans 179–301 (CAQCEMEHSA…AVKFMFSYPC (123 aa)).

The protein belongs to the secreted frizzled-related protein (sFRP) family. As to expression, strongly expressed in the retinal pigment epithelium (RPE). Weak expression in retina, brain, heart, liver, kidney, testis and muscle.

The protein localises to the secreted. In terms of biological role, soluble frizzled-related proteins (sFRPS) function as modulators of Wnt signaling through direct interaction with Wnts. They have a role in regulating cell growth and differentiation in specific cell types. SFRP5 may be involved in determining the polarity of photoreceptor, and perhaps other, cells in the retina. Inhibits Wnt8 signaling, in vitro. The sequence is that of Secreted frizzled-related protein 5 (SFRP5) from Bos taurus (Bovine).